A 431-amino-acid chain; its full sequence is Glucose-1-phosphate adenylyltransferase (431 aa).

A beta-D-fructose 1,6-bisphosphate-binding site is contributed by K39. AMP-binding residues include R40, H46, and R52. Y114 contacts alpha-D-glucose 1-phosphate. R130 contacts AMP. Alpha-D-glucose 1-phosphate-binding positions include G179, 194–195 (EK), and S212. The AMP site is built by E370 and R386. Residues 419 to 423 (REMLR) and 429 to 431 (QER) contribute to the beta-D-fructose 1,6-bisphosphate site.

Belongs to the bacterial/plant glucose-1-phosphate adenylyltransferase family. Homotetramer.

The catalysed reaction is alpha-D-glucose 1-phosphate + ATP + H(+) = ADP-alpha-D-glucose + diphosphate. It participates in glycan biosynthesis; glycogen biosynthesis. With respect to regulation, allosterically activated by fructose-1,6-bisphosphate (F16BP) and inhibited by AMP. Involved in the biosynthesis of ADP-glucose, a building block required for the elongation reactions to produce glycogen. Catalyzes the reaction between ATP and alpha-D-glucose 1-phosphate (G1P) to produce pyrophosphate and ADP-Glc. The chain is Glucose-1-phosphate adenylyltransferase from Shigella dysenteriae serotype 1 (strain Sd197).